Here is a 247-residue protein sequence, read N- to C-terminus: Adenosylcobinamide-GDP ribazoletransferase (247 aa).

A run of 5 helical transmembrane segments spans residues 34–54 (IVMFPFIGLILGGVSGLIFIL), 59–79 (CGIPLAALFCILALALLTGGF), 113–133 (GGLALIFVLLAKILVVSELAL), 138–158 (MLAALAAACAAGRGSAVLLMY), and 187–207 (LAVIVATVLLPGMQGLAAMVV).

The protein belongs to the CobS family. Requires Mg(2+) as cofactor.

It is found in the cell inner membrane. The catalysed reaction is alpha-ribazole + adenosylcob(III)inamide-GDP = adenosylcob(III)alamin + GMP + H(+). The enzyme catalyses alpha-ribazole 5'-phosphate + adenosylcob(III)inamide-GDP = adenosylcob(III)alamin 5'-phosphate + GMP + H(+). It functions in the pathway cofactor biosynthesis; adenosylcobalamin biosynthesis; adenosylcobalamin from cob(II)yrinate a,c-diamide: step 7/7. Its function is as follows. Joins adenosylcobinamide-GDP and alpha-ribazole to generate adenosylcobalamin (Ado-cobalamin). Also synthesizes adenosylcobalamin 5'-phosphate from adenosylcobinamide-GDP and alpha-ribazole 5'-phosphate. The polypeptide is Adenosylcobinamide-GDP ribazoletransferase (Salmonella dublin (strain CT_02021853)).